The sequence spans 506 residues: Probable alpha-L-arabinofuranosidase B (506 aa).

Positions Met-1 to Ala-26 are cleaved as a signal peptide. The tract at residues Gly-27–Val-343 is catalytic. Cystine bridges form between Cys-29–Cys-39, Cys-89–Cys-94, and Cys-184–Cys-185. Position 227 (Asp-227) interacts with substrate. Catalysis depends on Glu-229, which acts as the Nucleophile. Asn-230 is a substrate binding site. N-linked (GlcNAc...) asparagine glycosylation occurs at Asn-285. Position 304 (Gly-304) interacts with substrate. Asp-305 functions as the Proton donor in the catalytic mechanism. Positions Ala-344 to Ala-506 are ABD. Asn-375 carries N-linked (GlcNAc...) asparagine glycosylation. A disulfide bridge connects residues Cys-409 and Cys-447. The substrate site is built by His-424, Phe-427, Asp-443, His-471, Leu-476, and Asp-496.

Belongs to the glycosyl hydrolase 54 family.

The protein localises to the secreted. The enzyme catalyses Hydrolysis of terminal non-reducing alpha-L-arabinofuranoside residues in alpha-L-arabinosides.. The protein operates within glycan metabolism; L-arabinan degradation. Alpha-L-arabinofuranosidase involved in the degradation of arabinoxylan, a major component of plant hemicellulose. Able to hydrolyze 1,5-, 1,3- and 1,2-alpha-linkages not only in L-arabinofuranosyl oligosaccharides, but also in polysaccharides containing terminal non-reducing L-arabinofuranoses in side chains, like L-arabinan, arabinogalactan and arabinoxylan. The protein is Probable alpha-L-arabinofuranosidase B (abfB) of Aspergillus terreus (strain NIH 2624 / FGSC A1156).